A 275-amino-acid polypeptide reads, in one-letter code: Polyamine aminopropyltransferase 1 (275 aa).

Positions 2-235 (ELWFTEKQTK…GLWTFTIGSK (234 aa)) constitute a PABS domain. S-methyl-5'-thioadenosine is bound at residue Gln-31. Spermidine-binding residues include His-62 and Asp-86. S-methyl-5'-thioadenosine-binding positions include Glu-106 and 137–138 (DG). Asp-155 acts as the Proton acceptor in catalysis. Residue 155 to 158 (DSTE) coordinates spermidine. Pro-162 serves as a coordination point for S-methyl-5'-thioadenosine.

It belongs to the spermidine/spermine synthase family. In terms of assembly, homodimer or homotetramer.

It localises to the cytoplasm. The enzyme catalyses S-adenosyl 3-(methylsulfanyl)propylamine + putrescine = S-methyl-5'-thioadenosine + spermidine + H(+). The protein operates within amine and polyamine biosynthesis; spermidine biosynthesis; spermidine from putrescine: step 1/1. Functionally, catalyzes the irreversible transfer of a propylamine group from the amino donor S-adenosylmethioninamine (decarboxy-AdoMet) to putrescine (1,4-diaminobutane) to yield spermidine. The polypeptide is Polyamine aminopropyltransferase 1 (Bacillus cereus (strain ATCC 14579 / DSM 31 / CCUG 7414 / JCM 2152 / NBRC 15305 / NCIMB 9373 / NCTC 2599 / NRRL B-3711)).